The primary structure comprises 392 residues: Phosphoglycerate kinase (392 aa).

Substrate-binding positions include 21-23 (DMN), Arg-36, 59-62 (HLGR), Arg-114, and Arg-147. ATP is bound by residues Lys-198, Glu-320, and 346–349 (GGDT).

It belongs to the phosphoglycerate kinase family. In terms of assembly, monomer.

The protein resides in the cytoplasm. The catalysed reaction is (2R)-3-phosphoglycerate + ATP = (2R)-3-phospho-glyceroyl phosphate + ADP. It functions in the pathway carbohydrate degradation; glycolysis; pyruvate from D-glyceraldehyde 3-phosphate: step 2/5. The protein is Phosphoglycerate kinase (pgk) of Neisseria meningitidis serogroup B (strain ATCC BAA-335 / MC58).